The following is a 494-amino-acid chain: MLASGLLLVALLACLTVMVLMSVWQQRKSRGKLPPGPTPLPFIGNYLQLNTEHICDSIMKFSECYGPVFTIHLGPRRVVVLCGHDAVREALVDQAEEFSGRGEQATFDWVFKGYGVAFSNGERAKQLLRFAIATLRDFGVGKRGIEERIQEESGFLIEAIRSTHGANIDPTFFLSRTVSNVISSIVFGDRFDYEDKEFLSLLSMMLGIFQFTSTSTGQLYEMFSSVMKHLPGPQQQAFKLLQGLEDFIAKKVEHNQRTLDPNSPQDFIDSFLIHMQEEEKNPNTEFYLKNLMMSTLNLFIAGTETVSTTLRYGFLLLMKHPEVEAKVHEEIDRVIGKNRQPKFEDRTKMPYMEAVIHEIQRFGDVIPMSLARRVKKDTKFRDFFLPKGTEVFPMLGSVLRDPSFFSNPQDFNPQHFLDDKGQFKKSDAFVPFSIGKRNCFGEGLARMELFLFFTTVMQNFRLKSSQSPKDIDVSPKHVVFATIPRNYTMSFLPR.

Position 439 (cysteine 439) interacts with heme.

Belongs to the cytochrome P450 family. Heme is required as a cofactor.

The protein localises to the endoplasmic reticulum membrane. Its subcellular location is the microsome membrane. The catalysed reaction is an organic molecule + reduced [NADPH--hemoprotein reductase] + O2 = an alcohol + oxidized [NADPH--hemoprotein reductase] + H2O + H(+). Functionally, cytochromes P450 are a group of heme-thiolate monooxygenases. In liver microsomes, this enzyme is involved in an NADPH-dependent electron transport pathway. It oxidizes a variety of structurally unrelated compounds, including steroids, fatty acids, and xenobiotics. This chain is Cytochrome P450 2A7 (CYP2A7), found in Homo sapiens (Human).